A 201-amino-acid chain; its full sequence is Single-stranded DNA-binding protein DdrA (201 aa).

It belongs to the RAD52 family. In terms of assembly, the truncated form (1-160) of DdrA forms heptameric rings that can assemble into a 3-ring structure.

Functionally, ssDNA-binding protein that contributes to the ionizing radiation resistance of D.deserti. Plays a role in DNA repair and genome reconstitution, in a RecA-independent process, since DdrA is essential for recovery from severe genomic fragmentation as a result of exposure to severe levels of ionizing radiation in an environment lacking nutrients. In vitro, binds to the 3'-ends of single-stranded DNA, and probably protects them from nuclease degradation. Thus, DdrA is part of a DNA end-protection system that helps to preserve genome integrity following irradiation or desiccation. This is Single-stranded DNA-binding protein DdrA (ddrA) from Deinococcus deserti (strain DSM 17065 / CIP 109153 / LMG 22923 / VCD115).